Consider the following 133-residue polypeptide: MTWNPLALATALQTVPEQNIDVTNSENALIIKMNDYGDLQINILFTSRQMIIETFICPVSSISNPDEFNTFLLRNQKMMPLSSVGISSVQQEEYYIVFGALSLKSSLEDILLEITSLVDNALDLAEITEEYSH.

This is an uncharacterized protein from Escherichia coli O157:H7.